The chain runs to 343 residues: Globoside alpha-1,3-N-acetylgalactosaminyltransferase 1 (343 aa).

Residues 1–6 (MISRKA) lie on the Cytoplasmic side of the membrane. A helical; Signal-anchor for type II membrane protein transmembrane segment spans residues 7–27 (LGSLVCLSAVATLIWIASGNW). The Lumenal portion of the chain corresponds to 28–343 (KVHYLPYYLP…VDKNYQEVRN (316 aa)). Asparagine 104 carries N-linked (GlcNAc...) asparagine glycosylation. Substrate is bound by residues 112-117 (FAVGKY), 202-204 (DID), and 224-227 (HPGY). The Mn(2+) site is built by aspartate 202 and aspartate 204. The active-site Nucleophile is glutamate 294.

It belongs to the glycosyltransferase 6 family. It depends on Mn(2+) as a cofactor.

The protein resides in the golgi apparatus membrane. It participates in protein modification; protein glycosylation. Functionally, may catalyze the formation of some glycolipid via the addition of N-acetylgalactosamine (GalNAc) in alpha-1,3-linkage to some substrate. Glycolipids probably serve for adherence of some pathogens. This Gallus gallus (Chicken) protein is Globoside alpha-1,3-N-acetylgalactosaminyltransferase 1.